The primary structure comprises 124 residues: Small ribosomal subunit protein uS12 (124 aa).

The disordered stretch occupies residues 1–42; the sequence is MPTTQQLIRKGRKTEEETSDAPALEGSPQRRGVCTRVYTTTP. Asp-89 is subject to 3-methylthioaspartic acid. Residues 105-124 form a disordered region; it reads AGVEERRQGRSKYGTKKPRE. Positions 113–124 are enriched in basic residues; that stretch reads GRSKYGTKKPRE.

The protein belongs to the universal ribosomal protein uS12 family. As to quaternary structure, part of the 30S ribosomal subunit. Contacts proteins S8 and S17. May interact with IF1 in the 30S initiation complex.

With S4 and S5 plays an important role in translational accuracy. Functionally, interacts with and stabilizes bases of the 16S rRNA that are involved in tRNA selection in the A site and with the mRNA backbone. Located at the interface of the 30S and 50S subunits, it traverses the body of the 30S subunit contacting proteins on the other side and probably holding the rRNA structure together. The combined cluster of proteins S8, S12 and S17 appears to hold together the shoulder and platform of the 30S subunit. In Salinibacter ruber (strain DSM 13855 / M31), this protein is Small ribosomal subunit protein uS12.